The primary structure comprises 257 residues: 5'-nucleotidase SurE (257 aa).

A divalent metal cation contacts are provided by aspartate 8, aspartate 9, serine 40, and asparagine 95.

This sequence belongs to the SurE nucleotidase family. A divalent metal cation is required as a cofactor.

Its subcellular location is the cytoplasm. The enzyme catalyses a ribonucleoside 5'-phosphate + H2O = a ribonucleoside + phosphate. In terms of biological role, nucleotidase that shows phosphatase activity on nucleoside 5'-monophosphates. The sequence is that of 5'-nucleotidase SurE from Desulfovibrio desulfuricans (strain ATCC 27774 / DSM 6949 / MB).